The sequence spans 261 residues: Ribonuclease PH (261 aa).

Phosphate-binding positions include Arg-87 and 125–127 (GTR).

This sequence belongs to the RNase PH family. As to quaternary structure, homohexameric ring arranged as a trimer of dimers.

The catalysed reaction is tRNA(n+1) + phosphate = tRNA(n) + a ribonucleoside 5'-diphosphate. Phosphorolytic 3'-5' exoribonuclease that plays an important role in tRNA 3'-end maturation. Removes nucleotide residues following the 3'-CCA terminus of tRNAs; can also add nucleotides to the ends of RNA molecules by using nucleoside diphosphates as substrates, but this may not be physiologically important. Probably plays a role in initiation of 16S rRNA degradation (leading to ribosome degradation) during starvation. The protein is Ribonuclease PH of Caldanaerobacter subterraneus subsp. tengcongensis (strain DSM 15242 / JCM 11007 / NBRC 100824 / MB4) (Thermoanaerobacter tengcongensis).